Consider the following 317-residue polypeptide: Adenosine receptor A3 (317 aa).

Residues 1–14 (MPVNSTAVSLASVT) are Extracellular-facing. N-linked (GlcNAc...) asparagine glycosylation occurs at Asn4. A helical transmembrane segment spans residues 15–37 (YISVEILIGLCAIVGNVLVIWVV). The Cytoplasmic portion of the chain corresponds to 38 to 48 (KLNPSLQTTTF). Residues 49-72 (YFIVSLALADIAVGVLVMPLAIVI) form a helical membrane-spanning segment. The Extracellular segment spans residues 73–84 (SLGVTIHFYSCL). A disulfide bond links Cys83 and Cys165. The helical transmembrane segment at 85–106 (LMTCLLMIFTHASIMSLLAIAV) threads the bilayer. Residues 107–126 (DRYLRVKLTVRYRRVTTQRR) are Cytoplasmic-facing. A helical membrane pass occupies residues 127–148 (IWLALGLCWLVSFLVGLTPMFG). The Extracellular segment spans residues 149 to 176 (WNMKLSSADKNLTFLPCQFRSVMRMDYM). Residues 177–197 (VYFSFFTWILIPLVVMCAIYF) form a helical membrane-spanning segment. Residues 198-230 (DIFYVIRNRLSQNFSGSKETGAFYGREFKTAKS) lie on the Cytoplasmic side of the membrane. Residues 231–254 (LSLVLFLFALSWLPLSIINCIIYF) form a helical membrane-spanning segment. The Extracellular segment spans residues 255 to 260 (NGEVPQ). The helical transmembrane segment at 261–283 (IVLYLGILLSHANSMMNPIVYAY) threads the bilayer. The Cytoplasmic portion of the chain corresponds to 284–317 (KIKKFKETYLLILKACVICQPSKSMDPSIEQTSE). A lipid anchor (S-palmitoyl cysteine) is attached at Cys302.

This sequence belongs to the G-protein coupled receptor 1 family. In terms of processing, phosphorylation on Thr-315 and Ser-316 may be crucial for rapid desensitization. Phosphorylation on Thr-315 may be necessary for phosphorylation on Ser-316 to occur.

The protein resides in the cell membrane. In terms of biological role, receptor for adenosine. The activity of this receptor is mediated by G proteins which inhibits adenylyl cyclase. In Bos taurus (Bovine), this protein is Adenosine receptor A3 (ADORA3).